Here is a 164-residue protein sequence, read N- to C-terminus: Ecotin (164 aa).

An N-terminal signal peptide occupies residues Met1–Ala20. Cys72 and Cys109 form a disulfide bridge.

Belongs to the protease inhibitor I11 (ecotin) family. As to quaternary structure, homodimer.

Its subcellular location is the periplasm. In terms of biological role, general inhibitor of pancreatic serine proteases: inhibits chymotrypsin, trypsin, elastases, factor X, kallikrein as well as a variety of other proteases. The polypeptide is Ecotin (Salmonella typhi).